The following is an 867-amino-acid chain: Protein melted homolog (867 aa).

Residues 480–505 form a disordered region; it reads MPSSSRTNVHLSQAASSSRGHSLPQT. One can recognise a PH domain in the interval 753–860; that stretch reads EKVLEGQLKE…WLHCLQIAMA (108 aa).

The protein belongs to the MELT/VEPH family.

The protein resides in the cell membrane. The polypeptide is Protein melted homolog (Caenorhabditis briggsae).